The following is a 201-amino-acid chain: Casparian strip membrane protein 7 (201 aa).

The segment covering 1 to 11 has biased composition (acidic residues); sequence MEAGEEIEDGE. The disordered stretch occupies residues 1–26; it reads MEAGEEIEDGEPSTPTYKAHHPPPHL. The Cytoplasmic segment spans residues 1 to 34; the sequence is MEAGEEIEDGEPSTPTYKAHHPPPHLPPPMRSSG. The helical transmembrane segment at 35–55 threads the bilayer; sequence VSLVLSVADLVLRFVAIGGTA. Residues 56–86 are Extracellular-facing; it reads GSAIAMATTSETLPFAAPFVRFRAEYSDLPT. Residues 87–107 form a helical membrane-spanning segment; that stretch reads LMFFVVASSVVCAYLVLSLPA. Topologically, residues 108–128 are cytoplasmic; sequence SVVHVVRPGARSSRAILAFLD. Residues 129 to 149 form a helical membrane-spanning segment; that stretch reads TVMLALLTASASAAAAIVYLA. At 150-171 the chain is on the extracellular side; it reads HRGSARANWLGICQQFTSFCQR. Residues 172–192 traverse the membrane as a helical segment; it reads ITASLVGSFAAAVVLVALVFL. The Cytoplasmic portion of the chain corresponds to 193–201; that stretch reads SALSLARRA.

This sequence belongs to the Casparian strip membrane proteins (CASP) family. Homodimer and heterodimers.

The protein localises to the cell membrane. Functionally, regulates membrane-cell wall junctions and localized cell wall deposition. Required for establishment of the Casparian strip membrane domain (CSD) and the subsequent formation of Casparian strips, a cell wall modification of the root endodermis that determines an apoplastic barrier between the intraorganismal apoplasm and the extraorganismal apoplasm and prevents lateral diffusion. This Oryza sativa subsp. japonica (Rice) protein is Casparian strip membrane protein 7.